The primary structure comprises 497 residues: MVLAELGGRIMSAIQKMNNVTIIDEKALNDCLNEITRALLQSDVSFPLVKEMQTNIKKIVNLEDLAAGHNKRRIIEQAIFSELCKMLDPGKSAFAPKKAKPSVVMFVGLQGEVLEKPQLVPSMLIIIRRKGYKPALVCADTFRAGAFDQLKQNATKSKIPYYGSYTGSDPVKIAVEGVDRFKKENCDLIIVDTSGRHKQQASLFEEMRQISEATKPDLVIFVMDSSIGQTAFEQARAFKQTVAVGAVIITKMDGHAKGGGTLSAVAATKSPVIFIGTGEHMDEFEVFDAKPFVSRLLGNGDMSGFVNKLQEVVPKDQQPELLEMLSHGKFTLRIMYDQFQNMLNMGPLKEVFSMLPGMRAEMMPEGHEKESQAKIKRYMTMMDSMTNEELDSSNPKVFNESRIMRIARGSGRIVREVMEMLEEYKRLTTMWGKVKGLKNLEKGNMSALSKNKNSQQLSKVLPAQMLKQIGGMSGLQSLMKQMGSGKDLMGMFGGRDE.

The G-domain stretch occupies residues 1–297; that stretch reads MVLAELGGRI…DAKPFVSRLL (297 aa). GTP is bound by residues 108-117, 192-196, and 250-253; these read GLQGEVLEKP, DTSGR, and TKMD. The M-domain stretch occupies residues 298–497; the sequence is GNGDMSGFVN…LMGMFGGRDE (200 aa).

This sequence belongs to the GTP-binding SRP family. SRP54 subfamily. As to quaternary structure, component of a signal recognition particle (SRP) complex that consists of a 7SL RNA molecule of 300 nucleotides and six protein subunits: SRP72, SRP68, SRP54, SRP19, SRP14 and SRP9.

Its subcellular location is the cytoplasm. The protein localises to the endoplasmic reticulum. The enzyme catalyses GTP + H2O = GDP + phosphate + H(+). In terms of biological role, component of the signal recognition particle (SRP) complex, a ribonucleoprotein complex that mediates the cotranslational targeting of secretory and membrane proteins to the endoplasmic reticulum (ER). As part of the SRP complex, associates with the SRP receptor (SR) component SRPRA to target secretory proteins to the endoplasmic reticulum membrane. Binds to the signal sequence of presecretory proteins when they emerge from the ribosomes. Displays basal GTPase activity, and stimulates reciprocal GTPase activation of the SR subunit SRPRA. Forms a guanosine 5'-triphosphate (GTP)-dependent complex with the SR subunit SRPRA. SR compaction and GTPase mediated rearrangement of SR drive SRP-mediated cotranslational protein translocation into the ER. Requires the presence of SRP9/SRP14 and/or SRP19 to stably interact with RNA. The chain is Signal recognition particle subunit SRP54 2 (SRP-54B) from Arabidopsis thaliana (Mouse-ear cress).